Here is a 178-residue protein sequence, read N- to C-terminus: Fatty-acid and retinol-binding protein 1 (178 aa).

Positions 1 to 16 (MYHRLILLALVGTTMA) are cleaved as a signal peptide. Coiled-coil stretches lie at residues 67 to 89 (DAALEALKDKSDKLYKNAVELRN) and 130 to 153 (KQAARDIIAKYQALSEETKEELKV).

Belongs to the fatty-acid and retinol-binding protein (FARBP) family. Not glycosylated.

It is found in the secreted. Binds retinol and different fatty acids. In Brugia pahangi (Filarial nematode worm), this protein is Fatty-acid and retinol-binding protein 1.